Consider the following 866-residue polypeptide: DNA mismatch repair protein MutS (866 aa).

Residue 613–620 (GPNMGGKS) participates in ATP binding.

The protein belongs to the DNA mismatch repair MutS family.

This protein is involved in the repair of mismatches in DNA. It is possible that it carries out the mismatch recognition step. This protein has a weak ATPase activity. This chain is DNA mismatch repair protein MutS, found in Haemophilus ducreyi (strain 35000HP / ATCC 700724).